Reading from the N-terminus, the 543-residue chain is Chaperonin GroEL (543 aa).

Residues 30 to 33 (TLGP), lysine 51, 87 to 91 (DGTTT), glycine 415, 480 to 482 (NAL), and aspartate 496 each bind ATP.

This sequence belongs to the chaperonin (HSP60) family. Forms a cylinder of 14 subunits composed of two heptameric rings stacked back-to-back. Interacts with the co-chaperonin GroES.

Its subcellular location is the cytoplasm. The catalysed reaction is ATP + H2O + a folded polypeptide = ADP + phosphate + an unfolded polypeptide.. In terms of biological role, together with its co-chaperonin GroES, plays an essential role in assisting protein folding. The GroEL-GroES system forms a nano-cage that allows encapsulation of the non-native substrate proteins and provides a physical environment optimized to promote and accelerate protein folding. The sequence is that of Chaperonin GroEL from Gemmatimonas aurantiaca (strain DSM 14586 / JCM 11422 / NBRC 100505 / T-27).